The chain runs to 268 residues: NADPH-dependent 7-cyano-7-deazaguanine reductase (268 aa).

79–81 (VES) provides a ligand contact to substrate. 81 to 82 (SK) lines the NADPH pocket. Residue Cys-176 is the Thioimide intermediate of the active site. Catalysis depends on Asp-183, which acts as the Proton donor. 215 to 216 (HE) lines the substrate pocket. 244-245 (RG) provides a ligand contact to NADPH.

The protein belongs to the GTP cyclohydrolase I family. QueF type 2 subfamily. As to quaternary structure, homodimer.

Its subcellular location is the cytoplasm. It catalyses the reaction 7-aminomethyl-7-carbaguanine + 2 NADP(+) = 7-cyano-7-deazaguanine + 2 NADPH + 3 H(+). It functions in the pathway tRNA modification; tRNA-queuosine biosynthesis. Its function is as follows. Catalyzes the NADPH-dependent reduction of 7-cyano-7-deazaguanine (preQ0) to 7-aminomethyl-7-deazaguanine (preQ1). The protein is NADPH-dependent 7-cyano-7-deazaguanine reductase of Saccharophagus degradans (strain 2-40 / ATCC 43961 / DSM 17024).